Consider the following 570-residue polypeptide: MSFEISRKQYTDLYGPTVGDSVRLADTELFLCVEKDYAAIGEEVAFGGGKVIRDGMGQNGTLVRDVDIPDTVITNVIVLDYTGVYKADVALRDGKIFRIGKAGNPNVMENVDIVIGVATDIIAGEGKILTAGGIDTHVHFLGTDQVNTALASGITTMIGGGTGPSQASMATTVTPGQWNTYNMLSAFEGMPMNFGILGKGHGSSKSPLAEQVRAGAIGLKIHEDWGATPSSINTALEVADDMDIQVALHSDTLNEAGFVEDTIEAIAGRVIHTFHTEGAGGGHAPDLIRVAALPNVLPASTNPTLPYTRNTVEEHLDMVMVAHHLNPDIPEDVAFADSRIRAETIAAEDVLHDMGIFSITSSDSQAMGRVGETITRTWQVADHMKRTRGSLTGDAPYNDNNRLRRFIAKYTINPAIAHGVDYVVGSVEEGKFADLVLWDPKFFGVKPDLVIKGGLMVNSLMGDSNGSIPTPQPRTLRNTWGAFGQAVSRSSITFLSQDAIDANVPDLLNLRKQIRGVRGVRNLTKRDMKLNAEMPDIRVDPETYQVFVNGELITSKPAETVPMARRYFLF.

In terms of domain architecture, Urease spans 132–570 (GGIDTHVHFL…VPMARRYFLF (439 aa)). Residues His137, His139, and Lys220 each contribute to the Ni(2+) site. Lys220 carries the post-translational modification N6-carboxylysine. Substrate is bound at residue His222. 2 residues coordinate Ni(2+): His249 and His275. His323 functions as the Proton donor in the catalytic mechanism. Position 363 (Asp363) interacts with Ni(2+).

This sequence belongs to the metallo-dependent hydrolases superfamily. Urease alpha subunit family. In terms of assembly, heterotrimer of UreA (gamma), UreB (beta) and UreC (alpha) subunits. Three heterotrimers associate to form the active enzyme. It depends on Ni cation as a cofactor. Carboxylation allows a single lysine to coordinate two nickel ions.

Its subcellular location is the cytoplasm. The catalysed reaction is urea + 2 H2O + H(+) = hydrogencarbonate + 2 NH4(+). It functions in the pathway nitrogen metabolism; urea degradation; CO(2) and NH(3) from urea (urease route): step 1/1. This chain is Urease subunit alpha, found in Corynebacterium glutamicum (strain ATCC 13032 / DSM 20300 / JCM 1318 / BCRC 11384 / CCUG 27702 / LMG 3730 / NBRC 12168 / NCIMB 10025 / NRRL B-2784 / 534).